The chain runs to 561 residues: Potassium-transporting ATPase potassium-binding subunit (561 aa).

10 consecutive transmembrane segments (helical) span residues 4–24, 65–85, 133–153, 177–197, 253–273, 285–305, 380–400, 417–437, 484–504, and 528–548; these read IVMQ…PLGI, AVSV…VLML, IGLT…LFAV, LYIL…QGVV, FTNL…VVMF, AIMT…TISE, GLYG…LLVG, MVCL…AVAV, MVGA…ALYL, and FIGL…LPAL.

It belongs to the KdpA family. In terms of assembly, the system is composed of three essential subunits: KdpA, KdpB and KdpC.

The protein resides in the cell membrane. Part of the high-affinity ATP-driven potassium transport (or Kdp) system, which catalyzes the hydrolysis of ATP coupled with the electrogenic transport of potassium into the cytoplasm. This subunit binds the extracellular potassium ions and delivers the ions to the membrane domain of KdpB through an intramembrane tunnel. The chain is Potassium-transporting ATPase potassium-binding subunit from Listeria monocytogenes serotype 4b (strain F2365).